The primary structure comprises 127 residues: UPF0325 protein VC_2264 (127 aa).

The protein belongs to the UPF0325 family.

In Vibrio cholerae serotype O1 (strain ATCC 39315 / El Tor Inaba N16961), this protein is UPF0325 protein VC_2264.